The chain runs to 156 residues: MNVTVTLIGQMVAFGILVWFVNRFLWGPLTNLMEERKKRVADGLAAAERGKHERELAEKRAKETLHEAKEKAAEIITQAQKRAGEIIEEAKEAAQAEGERLKVSANAEIQQEMNRAREDLRGQVVSIAVAGASKILKRELDEKANEALVKELVAQI.

The helical transmembrane segment at 1–21 threads the bilayer; the sequence is MNVTVTLIGQMVAFGILVWFV.

It belongs to the ATPase B chain family. F-type ATPases have 2 components, F(1) - the catalytic core - and F(0) - the membrane proton channel. F(1) has five subunits: alpha(3), beta(3), gamma(1), delta(1), epsilon(1). F(0) has three main subunits: a(1), b(2) and c(10-14). The alpha and beta chains form an alternating ring which encloses part of the gamma chain. F(1) is attached to F(0) by a central stalk formed by the gamma and epsilon chains, while a peripheral stalk is formed by the delta and b chains.

Its subcellular location is the cell inner membrane. Its function is as follows. F(1)F(0) ATP synthase produces ATP from ADP in the presence of a proton or sodium gradient. F-type ATPases consist of two structural domains, F(1) containing the extramembraneous catalytic core and F(0) containing the membrane proton channel, linked together by a central stalk and a peripheral stalk. During catalysis, ATP synthesis in the catalytic domain of F(1) is coupled via a rotary mechanism of the central stalk subunits to proton translocation. In terms of biological role, component of the F(0) channel, it forms part of the peripheral stalk, linking F(1) to F(0). In Nitrosococcus oceani (strain ATCC 19707 / BCRC 17464 / JCM 30415 / NCIMB 11848 / C-107), this protein is ATP synthase subunit b.